We begin with the raw amino-acid sequence, 504 residues long: Sugar transport protein 14 (504 aa).

Topologically, residues 1–25 (MAGGALTDEGGLKRAHLYEHRITSY) are cytoplasmic. 12 helical membrane-spanning segments follow: residues 26–46 (FIFA…DLGV), 84–104 (ILTL…FGAS), 121–141 (VSFF…MLIL), 144–164 (IFLG…LSEM), 171–191 (GTVN…ANLI), 205–225 (LSLG…LVLP), 286–308 (LVIG…ILFY), 315–337 (SLGF…LVVA), 352–372 (FLLL…GVTL), 382–402 (LPKS…LAYG), 428–448 (VVVC…LVSL), and 454–474 (GIFL…YFLL). Topologically, residues 475-504 (PETKQVPIEEVYLLWRQHWLWKKYVEDVDE) are cytoplasmic.

Belongs to the major facilitator superfamily. Sugar transporter (TC 2.A.1.1) family.

The protein localises to the membrane. Functionally, mediates an active uptake of hexoses, probably by sugar/hydrogen symport. This Arabidopsis thaliana (Mouse-ear cress) protein is Sugar transport protein 14 (STP14).